We begin with the raw amino-acid sequence, 79 residues long: Exodeoxyribonuclease 7 small subunit (79 aa).

This sequence belongs to the XseB family. In terms of assembly, heterooligomer composed of large and small subunits.

Its subcellular location is the cytoplasm. The catalysed reaction is Exonucleolytic cleavage in either 5'- to 3'- or 3'- to 5'-direction to yield nucleoside 5'-phosphates.. In terms of biological role, bidirectionally degrades single-stranded DNA into large acid-insoluble oligonucleotides, which are then degraded further into small acid-soluble oligonucleotides. The sequence is that of Exodeoxyribonuclease 7 small subunit from Geobacillus kaustophilus (strain HTA426).